A 628-amino-acid polypeptide reads, in one-letter code: EIN3-binding F-box protein 1 (628 aa).

The 49-residue stretch at 61-109 (PVSIDVLPDECLFEIFRRLSGPQERSACAFVSKQWLTLVSSIRQKEIDV) folds into the F-box domain.

Part of a SCF (SKP1-cullin-F-box) protein ligase complex. Interacts with CUL1, SKP1A/ASK1, SKP1B/ASK2, ASK11, ASK12, ASK13, ASK18, EIN3, and EIL1. Ubiquitous.

Its subcellular location is the nucleus. The protein operates within protein modification; protein ubiquitination. In terms of biological role, component of SCF(EBF1) E3 ubiquitin ligase complexes, which may mediate the ubiquitination and subsequent proteasomal degradation of target proteins (probably including EIN3 and EIL1). Regulator of the ethylene signaling cascade by modulating the stability of EIN3 and EIL1 proteins. Confers insensitivity to ethylene. The chain is EIN3-binding F-box protein 1 (EBF1) from Arabidopsis thaliana (Mouse-ear cress).